Here is a 388-residue protein sequence, read N- to C-terminus: Dual-specificity RNA methyltransferase RlmN (388 aa).

The active-site Proton acceptor is the glutamate 109. The 240-residue stretch at 115 to 354 folds into the Radical SAM core domain; that stretch reads EEDRATLCVS…TIVRKTRGDD (240 aa). A disulfide bond links cysteine 122 and cysteine 359. Residues cysteine 129, cysteine 133, and cysteine 136 each contribute to the [4Fe-4S] cluster site. S-adenosyl-L-methionine contacts are provided by residues 183-184, serine 215, 237-239, and asparagine 316; these read GE and SLH. Cysteine 359 (S-methylcysteine intermediate) is an active-site residue.

The protein belongs to the radical SAM superfamily. RlmN family. It depends on [4Fe-4S] cluster as a cofactor.

It is found in the cytoplasm. It carries out the reaction adenosine(2503) in 23S rRNA + 2 reduced [2Fe-2S]-[ferredoxin] + 2 S-adenosyl-L-methionine = 2-methyladenosine(2503) in 23S rRNA + 5'-deoxyadenosine + L-methionine + 2 oxidized [2Fe-2S]-[ferredoxin] + S-adenosyl-L-homocysteine. The catalysed reaction is adenosine(37) in tRNA + 2 reduced [2Fe-2S]-[ferredoxin] + 2 S-adenosyl-L-methionine = 2-methyladenosine(37) in tRNA + 5'-deoxyadenosine + L-methionine + 2 oxidized [2Fe-2S]-[ferredoxin] + S-adenosyl-L-homocysteine. Specifically methylates position 2 of adenine 2503 in 23S rRNA and position 2 of adenine 37 in tRNAs. m2A2503 modification seems to play a crucial role in the proofreading step occurring at the peptidyl transferase center and thus would serve to optimize ribosomal fidelity. The protein is Dual-specificity RNA methyltransferase RlmN of Klebsiella pneumoniae subsp. pneumoniae (strain ATCC 700721 / MGH 78578).